Consider the following 362-residue polypeptide: Formate dehydrogenase (362 aa).

Residues V93 and N119 each coordinate substrate. Residues 174-175 (RI), D195, 230-234 (PLHAG), T256, D282, 311-314 (HYSG), and S357 each bind NAD(+).

This sequence belongs to the D-isomer specific 2-hydroxyacid dehydrogenase family. FDH subfamily. In terms of assembly, homodimer.

It localises to the cytoplasm. The catalysed reaction is formate + NAD(+) = CO2 + NADH. Functionally, catalyzes the NAD(+)-dependent oxidation of formate to carbon dioxide. Formate oxidation is the final step in the methanol oxidation pathway in methylotrophic microorganisms. Has a role in the detoxification of exogenous formate in non-methylotrophic organisms. This is Formate dehydrogenase from Pichia angusta (Yeast).